The primary structure comprises 1022 residues: D-2-hydroxyglutarate dehydrogenase (1022 aa).

The FAD-binding PCMH-type domain occupies 53–286; that stretch reads YQLLPDAVLF…SEARLDITPL (234 aa). Residues R407 and H505 each contribute to the (R)-2-hydroxyglutarate site. Residues 667 to 700 form the 4Fe-4S ferredoxin-type domain; it reads FSHEVKEAMSGCLACKACSTQCPIKIDVPAFRSR. Residues C678, C681, C684, and C688 each coordinate [4Fe-4S] cluster.

This sequence in the N-terminal section; belongs to the FAD-binding oxidoreductase/transferase type 4 family. In terms of assembly, homotetramer. Requires [4Fe-4S] cluster as cofactor. The cofactor is FAD.

The catalysed reaction is (R)-2-hydroxyglutarate + A = 2-oxoglutarate + AH2. Activity is completely inhibited by the addition of 0.5 mM Mn(2+), Ni(2+), or Co(2+) and partially inhibited by 0.5 mM Zn(2+). Catalyzes the oxidation of D-2-hydroxyglutarate (D-2-HGA) to 2-oxoglutarate. Appears to be the only D2HGDH in P.ananatis, providing the way to recycle D-2-HGA produced during L-serine synthesis by SerA, by converting it back to 2-oxoglutarate. Is involved in the utilization of D-2-HGA, that can support the growth of P.ananatis as a sole carbon source, although it barely serves as a good substrate. The physiological molecule that functions as the primary electron acceptor during D-2-HGA oxidation by YdiJ in P.ananatis is unknown. Shows strict substrate specificity towards D-2-HGA, since it has no detectable activity on L-2-hydroxyglutarate, L-malate, D-malate, L-lactate, D-lactate, L-tartrate, D-tartrate, L-glycerate, D-glycerate, glutarate, or pyruvate. In Pantoea ananatis (strain AJ13355), this protein is D-2-hydroxyglutarate dehydrogenase.